Here is a 125-residue protein sequence, read N- to C-terminus: S-adenosylmethionine decarboxylase proenzyme (125 aa).

The active-site Schiff-base intermediate with substrate; via pyruvic acid is serine 61. Serine 61 carries the pyruvic acid (Ser); by autocatalysis modification. The active-site Proton acceptor; for processing activity is histidine 66. Cysteine 81 acts as the Proton donor; for catalytic activity in catalysis.

The protein belongs to the prokaryotic AdoMetDC family. Type 1 subfamily. Heterotetramer of two alpha and two beta chains arranged as a dimer of alpha/beta heterodimers. It depends on pyruvate as a cofactor. In terms of processing, is synthesized initially as an inactive proenzyme. Formation of the active enzyme involves a self-maturation process in which the active site pyruvoyl group is generated from an internal serine residue via an autocatalytic post-translational modification. Two non-identical subunits are generated from the proenzyme in this reaction, and the pyruvate is formed at the N-terminus of the alpha chain, which is derived from the carboxyl end of the proenzyme. The post-translation cleavage follows an unusual pathway, termed non-hydrolytic serinolysis, in which the side chain hydroxyl group of the serine supplies its oxygen atom to form the C-terminus of the beta chain, while the remainder of the serine residue undergoes an oxidative deamination to produce ammonia and the pyruvoyl group blocking the N-terminus of the alpha chain.

It carries out the reaction S-adenosyl-L-methionine + H(+) = S-adenosyl 3-(methylsulfanyl)propylamine + CO2. It participates in amine and polyamine biosynthesis; S-adenosylmethioninamine biosynthesis; S-adenosylmethioninamine from S-adenosyl-L-methionine: step 1/1. Its function is as follows. Catalyzes the decarboxylation of S-adenosylmethionine to S-adenosylmethioninamine (dcAdoMet), the propylamine donor required for the synthesis of the polyamines spermine and spermidine from the diamine putrescine. The protein is S-adenosylmethionine decarboxylase proenzyme of Prochlorococcus marinus (strain MIT 9313).